We begin with the raw amino-acid sequence, 146 residues long: Large ribosomal subunit protein uL15 (146 aa).

Basic and acidic residues predominate over residues 1-13 (MKLHELKPAEGSR). Residues 1 to 48 (MKLHELKPAEGSRKVRNRVGRGIGSGNGKTAGKGHKGQNARSGGGVRL) are disordered. A compositionally biased stretch (gly residues) spans 21 to 31 (RGIGSGNGKTA).

It belongs to the universal ribosomal protein uL15 family. As to quaternary structure, part of the 50S ribosomal subunit.

In terms of biological role, binds to the 23S rRNA. The chain is Large ribosomal subunit protein uL15 from Bacillus cytotoxicus (strain DSM 22905 / CIP 110041 / 391-98 / NVH 391-98).